Consider the following 169-residue polypeptide: Ribosome maturation factor RimM (169 aa).

Positions 91–167 (EGEYYFADLI…RIVIATDFAH (77 aa)) constitute a PRC barrel domain.

Belongs to the RimM family. In terms of assembly, binds ribosomal protein uS19.

It localises to the cytoplasm. In terms of biological role, an accessory protein needed during the final step in the assembly of 30S ribosomal subunit, possibly for assembly of the head region. Essential for efficient processing of 16S rRNA. May be needed both before and after RbfA during the maturation of 16S rRNA. It has affinity for free ribosomal 30S subunits but not for 70S ribosomes. The protein is Ribosome maturation factor RimM of Erythrobacter litoralis (strain HTCC2594).